A 332-amino-acid polypeptide reads, in one-letter code: CRISPR-associated endonuclease Cas1 3 (332 aa).

3 residues coordinate Mn(2+): Glu159, His224, and Glu239.

It belongs to the CRISPR-associated endonuclease Cas1 family. In terms of assembly, homodimer, forms a heterotetramer with a Cas2 homodimer. The cofactor is Mg(2+). Mn(2+) serves as cofactor.

Functionally, CRISPR (clustered regularly interspaced short palindromic repeat), is an adaptive immune system that provides protection against mobile genetic elements (viruses, transposable elements and conjugative plasmids). CRISPR clusters contain spacers, sequences complementary to antecedent mobile elements, and target invading nucleic acids. CRISPR clusters are transcribed and processed into CRISPR RNA (crRNA). Acts as a dsDNA endonuclease. Involved in the integration of spacer DNA into the CRISPR cassette. This is CRISPR-associated endonuclease Cas1 3 from Thermus thermophilus (strain ATCC 27634 / DSM 579 / HB8).